The following is a 490-amino-acid chain: Betaine aldehyde dehydrogenase (490 aa).

2 residues coordinate K(+): isoleucine 27 and aspartate 93. Residue glycine 150–tryptophan 152 coordinates NAD(+). Lysine 162 acts as the Charge relay system in catalysis. Lysine 176–glutamate 179 is an NAD(+) binding site. Valine 180 contacts K(+). Residue glycine 230–threonine 233 coordinates NAD(+). Residue leucine 246 coordinates K(+). The Proton acceptor role is filled by glutamate 252. Glycine 254, cysteine 286, and glutamate 387 together coordinate NAD(+). Cysteine 286 acts as the Nucleophile in catalysis. Cysteine 286 carries the cysteine sulfenic acid (-SOH) modification. K(+) contacts are provided by lysine 457 and glycine 460. Glutamate 464 acts as the Charge relay system in catalysis.

It belongs to the aldehyde dehydrogenase family. As to quaternary structure, dimer of dimers. Requires K(+) as cofactor.

The catalysed reaction is betaine aldehyde + NAD(+) + H2O = glycine betaine + NADH + 2 H(+). It participates in amine and polyamine biosynthesis; betaine biosynthesis via choline pathway; betaine from betaine aldehyde: step 1/1. In terms of biological role, involved in the biosynthesis of the osmoprotectant glycine betaine. Catalyzes the irreversible oxidation of betaine aldehyde to the corresponding acid. In Pseudomonas putida (strain W619), this protein is Betaine aldehyde dehydrogenase.